The primary structure comprises 242 residues: Venom nerve growth factor 1 (242 aa).

The N-terminal stretch at 1-18 (MSMLCYTLIIAFLIGIWA) is a signal peptide. A propeptide spanning residues 19 to 125 (APKSEDNVPL…ALNRNIRSKR (107 aa)) is cleaved from the precursor. A disordered region spans residues 26–69 (VPLGSPATSDLSDTSCAQTHKALKTSRNTDQRHPAPKKAEDQEL). The segment covering 31–43 (PATSDLSDTSCAQ) has biased composition (polar residues). A compositionally biased stretch (basic and acidic residues) spans 52 to 66 (RNTDQRHPAPKKAED). 3 disulfide bridges follow: Cys-139/Cys-203, Cys-181/Cys-231, and Cys-191/Cys-233. N-linked (GlcNAc...) asparagine glycosylation is present at Asn-147.

The protein belongs to the NGF-beta family. Homodimer; non-covalently linked. As to expression, expressed by the venom gland.

It is found in the secreted. Its function is as follows. Nerve growth factor is important for the development and maintenance of the sympathetic and sensory nervous systems. It stimulates division and differentiation of sympathetic and embryonic sensory neurons as well as basal forebrain cholinergic neurons in the brain. Its relevance in the snake venom is not clear. However, it has been shown to inhibit metalloproteinase-dependent proteolysis of platelet glycoprotein Ib alpha, suggesting a metalloproteinase inhibition to prevent metalloprotease autodigestion and/or protection against prey proteases. Binds a lipid between the two protein chains in the homodimer. The lipid-bound form promotes histamine relase from mouse mast cells, contrary to the lipid-free form. This chain is Venom nerve growth factor 1, found in Demansia vestigiata (Lesser black whip snake).